A 518-amino-acid chain; its full sequence is F-box protein At1g47056 (518 aa).

The F-box domain maps to 37-82; it reads PDYTSSLPDECLALVFQFLNSGNRKRCALVCRRWMIVEGQNRYRLS.

The chain is F-box protein At1g47056 from Arabidopsis thaliana (Mouse-ear cress).